Here is a 227-residue protein sequence, read N- to C-terminus: Cytochrome c oxidase subunit 2 (227 aa).

Residues 1–14 (MAYPFQLGLQDATS) are Mitochondrial intermembrane-facing. A helical membrane pass occupies residues 15–45 (PIMEELMNFHDHTLMIVFLISSLVLYIISLM). Residues 46–59 (LTTKLTHTSTMDAQ) are Mitochondrial matrix-facing. The chain crosses the membrane as a helical span at residues 60–87 (EVETIWTILPAVILILIALPSLRILYMM). At 88–227 (DEINNPVLTV…NFENWSASMI (140 aa)) the chain is on the mitochondrial intermembrane side. The Cu cation site is built by histidine 161, cysteine 196, glutamate 198, cysteine 200, histidine 204, and methionine 207. Glutamate 198 lines the Mg(2+) pocket.

It belongs to the cytochrome c oxidase subunit 2 family. Component of the cytochrome c oxidase (complex IV, CIV), a multisubunit enzyme composed of 14 subunits. The complex is composed of a catalytic core of 3 subunits MT-CO1, MT-CO2 and MT-CO3, encoded in the mitochondrial DNA, and 11 supernumerary subunits COX4I, COX5A, COX5B, COX6A, COX6B, COX6C, COX7A, COX7B, COX7C, COX8 and NDUFA4, which are encoded in the nuclear genome. The complex exists as a monomer or a dimer and forms supercomplexes (SCs) in the inner mitochondrial membrane with NADH-ubiquinone oxidoreductase (complex I, CI) and ubiquinol-cytochrome c oxidoreductase (cytochrome b-c1 complex, complex III, CIII), resulting in different assemblies (supercomplex SCI(1)III(2)IV(1) and megacomplex MCI(2)III(2)IV(2)). Found in a complex with TMEM177, COA6, COX18, COX20, SCO1 and SCO2. Interacts with TMEM177 in a COX20-dependent manner. Interacts with COX20. Interacts with COX16. Cu cation is required as a cofactor.

Its subcellular location is the mitochondrion inner membrane. The enzyme catalyses 4 Fe(II)-[cytochrome c] + O2 + 8 H(+)(in) = 4 Fe(III)-[cytochrome c] + 2 H2O + 4 H(+)(out). In terms of biological role, component of the cytochrome c oxidase, the last enzyme in the mitochondrial electron transport chain which drives oxidative phosphorylation. The respiratory chain contains 3 multisubunit complexes succinate dehydrogenase (complex II, CII), ubiquinol-cytochrome c oxidoreductase (cytochrome b-c1 complex, complex III, CIII) and cytochrome c oxidase (complex IV, CIV), that cooperate to transfer electrons derived from NADH and succinate to molecular oxygen, creating an electrochemical gradient over the inner membrane that drives transmembrane transport and the ATP synthase. Cytochrome c oxidase is the component of the respiratory chain that catalyzes the reduction of oxygen to water. Electrons originating from reduced cytochrome c in the intermembrane space (IMS) are transferred via the dinuclear copper A center (CU(A)) of subunit 2 and heme A of subunit 1 to the active site in subunit 1, a binuclear center (BNC) formed by heme A3 and copper B (CU(B)). The BNC reduces molecular oxygen to 2 water molecules using 4 electrons from cytochrome c in the IMS and 4 protons from the mitochondrial matrix. The polypeptide is Cytochrome c oxidase subunit 2 (MT-CO2) (Maxomys bartelsii (Bartels's Javan maxomys)).